The primary structure comprises 81 residues: UPF0181 protein Spro_2806 (81 aa).

Residues 43-81 (EKHQGDQVSVMFDDEDDDEEYQERPDDQADDDSEEDENY) are disordered. Acidic residues-rich tracts occupy residues 54 to 63 (FDDEDDDEEY) and 70 to 81 (QADDDSEEDENY).

The protein belongs to the UPF0181 family.

This is UPF0181 protein Spro_2806 from Serratia proteamaculans (strain 568).